The chain runs to 307 residues: Pantothenate kinase (307 aa).

90–97 contacts ATP; that stretch reads GSVAVGKS.

Belongs to the prokaryotic pantothenate kinase family.

Its subcellular location is the cytoplasm. It carries out the reaction (R)-pantothenate + ATP = (R)-4'-phosphopantothenate + ADP + H(+). Its pathway is cofactor biosynthesis; coenzyme A biosynthesis; CoA from (R)-pantothenate: step 1/5. This is Pantothenate kinase from Enterococcus faecalis (strain ATCC 700802 / V583).